The following is a 430-amino-acid chain: Enolase (430 aa).

Residue Gln165 participates in (2R)-2-phosphoglycerate binding. Glu207 serves as the catalytic Proton donor. 3 residues coordinate Mg(2+): Asp244, Glu287, and Asp314. 4 residues coordinate (2R)-2-phosphoglycerate: Lys339, Arg368, Ser369, and Lys390. The active-site Proton acceptor is Lys339.

It belongs to the enolase family. Component of the RNA degradosome, a multiprotein complex involved in RNA processing and mRNA degradation. Requires Mg(2+) as cofactor.

It localises to the cytoplasm. Its subcellular location is the secreted. The protein localises to the cell surface. The enzyme catalyses (2R)-2-phosphoglycerate = phosphoenolpyruvate + H2O. It participates in carbohydrate degradation; glycolysis; pyruvate from D-glyceraldehyde 3-phosphate: step 4/5. Catalyzes the reversible conversion of 2-phosphoglycerate (2-PG) into phosphoenolpyruvate (PEP). It is essential for the degradation of carbohydrates via glycolysis. This Xanthomonas axonopodis pv. citri (strain 306) protein is Enolase.